The sequence spans 164 residues: Cell cycle link protein (164 aa).

Residues 9-22 form a binding to host SKP1 protein region; the sequence is LPEELKEKIMNEHL. The short motif at 111–115 is the LXCXE motif, interaction with host RBR element; it reads LYCSE.

This sequence belongs to the nanovirus Clink protein family. Interacts with host SKP1. Interacts (via LXCXE domain) with host retinoblastoma-related protein 1 (RBR1). Interacts (via LXCXE domain) with retinoblastoma-related proteins (RBR).

Interacts with and disrupts the function of host retinoblastoma-related proteins RBR, which are key regulators of the cell cycle. Induces transcriptional activation of E2F-regulated S-phase and G2/M-phase-specific genes. Inactivation of the ability of RBR to arrest the cell cycle leads to the stimulation of viral DNA replication. This chain is Cell cycle link protein (DNA-C), found in Trifolium subterraneum (Subterranean clover).